Consider the following 31-residue polypeptide: GSIPCGESCVYIPCITSIVGCSCKSKVCYKN.

Cystine bridges form between Cys5-Cys21, Cys9-Cys23, and Cys14-Cys28.

This is a cyclic peptide. In terms of processing, contains 3 disulfide bonds.

Its function is as follows. Probably participates in a plant defense mechanism. This chain is Cyclotide mra3, found in Melicytus ramiflorus (Whitey wood).